A 74-amino-acid polypeptide reads, in one-letter code: UPF0435 protein BCB4264_A0471 (74 aa).

This sequence belongs to the UPF0435 family.

In Bacillus cereus (strain B4264), this protein is UPF0435 protein BCB4264_A0471.